A 369-amino-acid polypeptide reads, in one-letter code: C-C chemokine receptor type 9 (369 aa).

The Extracellular segment spans residues methionine 1–serine 48. Residue asparagine 32 is glycosylated (N-linked (GlcNAc...) asparagine). Cystine bridges form between cysteine 38–cysteine 289 and cysteine 119–cysteine 198. A helical transmembrane segment spans residues histidine 49–tryptophan 74. At tyrosine 75–methionine 85 the chain is on the cytoplasmic side. The chain crosses the membrane as a helical span at residues phenylalanine 86–alanine 109. The Extracellular portion of the chain corresponds to glycine 110–lysine 120. The helical transmembrane segment at valine 121–glutamine 150 threads the bilayer. Topologically, residues alanine 151 to glutamine 159 are cytoplasmic. The helical transmembrane segment at lysine 160–leucine 185 threads the bilayer. Residues tyrosine 186 to alanine 208 lie on the Extracellular side of the membrane. The helical transmembrane segment at lysine 209 to glutamine 243 threads the bilayer. At alanine 244–serine 248 the chain is on the cytoplasmic side. The helical transmembrane segment at lysine 249–alanine 283 threads the bilayer. Topologically, residues methionine 284–threonine 290 are extracellular. A helical membrane pass occupies residues isoleucine 291–glycine 321. At glutamate 322–leucine 369 the chain is on the cytoplasmic side.

Belongs to the G-protein coupled receptor 1 family. Highly expressed in the thymus and low in lymph nodes and spleen.

It is found in the cell membrane. Receptor for chemokine SCYA25/TECK. Subsequently transduces a signal by increasing the intracellular calcium ions level. This is C-C chemokine receptor type 9 (Ccr9) from Mus musculus (Mouse).